The following is a 374-amino-acid chain: Proton-coupled zinc antiporter SLC30A8 (374 aa).

The Cytoplasmic segment spans residues 1–67 (MKGSEEAYLV…QREQTFAKKK (67 aa)). The segment at 18 to 48 (YSLTKDSEKNHPSKPPLQDEENPQSKYHCHN) is disordered. Zn(2+) is bound by residues His-45, Cys-46, and His-47. The HCH Motif; seals regulatory zinc-binding pocket motif lies at 45–47 (HCH). The helical transmembrane segment at 68-88 (LCIASLICFVFISAEIVGGYI) threads the bilayer. Topologically, residues 89-91 (AGS) are lumenal, vesicle. A helical transmembrane segment spans residues 92-112 (LAVVTDAAHLLVDLSSFFISL). Zn(2+) contacts are provided by His-100, Asp-104, and His-131. Residues 113–134 (CSLWLSSKSSTTRLTFGWHRAE) lie on the Cytoplasmic side of the membrane. The helical transmembrane segment at 135–155 (ILGALMSVITIWLVTGVLVYL) threads the bilayer. The Lumenal, vesicle segment spans residues 156 to 169 (ACERLIRPDYTIDG). A helical membrane pass occupies residues 170-190 (TVMLITSACALGANLVLALIL). Topologically, residues 191 to 222 (HQSGHGHSHAGGKHEHMASEYKPQTNASIRAA) are cytoplasmic. The chain crosses the membrane as a helical span at residues 223–243 (FIHVIGDLFQSISVLISALII). Positions 225 and 229 each coordinate Zn(2+). At 244 to 251 (YFKPEYKM) the chain is on the lumenal, vesicle side. A helical transmembrane segment spans residues 252–272 (ADPICTFIFSIFVLITTVTVL). Topologically, residues 273–374 (RDLLTVLMEG…ECMFCYEPTQ (102 aa)) are cytoplasmic. Residues His-306, His-323, His-350, Glu-357, Cys-366, and Cys-369 each contribute to the Zn(2+) site.

The protein belongs to the cation diffusion facilitator (CDF) transporter (TC 2.A.4) family. SLC30A subfamily. Homodimer.

It localises to the cytoplasmic vesicle. Its subcellular location is the secretory vesicle membrane. The protein localises to the cell membrane. It carries out the reaction Zn(2+)(in) + 2 H(+)(out) = Zn(2+)(out) + 2 H(+)(in). Functionally, proton-coupled zinc ion antiporter mediating the entry of zinc into the lumen of pancreatic beta cell secretory granules, thereby regulating insulin secretion. The chain is Proton-coupled zinc antiporter SLC30A8 (slc30a8) from Xenopus tropicalis (Western clawed frog).